A 316-amino-acid polypeptide reads, in one-letter code: 4-hydroxy-3-methylbut-2-enyl diphosphate reductase (316 aa).

Cys-12 provides a ligand contact to [4Fe-4S] cluster. 2 residues coordinate (2E)-4-hydroxy-3-methylbut-2-enyl diphosphate: His-41 and His-74. Dimethylallyl diphosphate contacts are provided by His-41 and His-74. 2 residues coordinate isopentenyl diphosphate: His-41 and His-74. Residue Cys-96 coordinates [4Fe-4S] cluster. Residue His-124 coordinates (2E)-4-hydroxy-3-methylbut-2-enyl diphosphate. His-124 serves as a coordination point for dimethylallyl diphosphate. His-124 lines the isopentenyl diphosphate pocket. Residue Glu-126 is the Proton donor of the active site. Thr-167 serves as a coordination point for (2E)-4-hydroxy-3-methylbut-2-enyl diphosphate. Cys-197 contributes to the [4Fe-4S] cluster binding site. Residues Ser-225, Ser-226, Asn-227, and Ser-269 each contribute to the (2E)-4-hydroxy-3-methylbut-2-enyl diphosphate site. Positions 225, 226, 227, and 269 each coordinate dimethylallyl diphosphate. Residues Ser-225, Ser-226, Asn-227, and Ser-269 each coordinate isopentenyl diphosphate.

The protein belongs to the IspH family. Homodimer. It depends on [4Fe-4S] cluster as a cofactor.

It catalyses the reaction isopentenyl diphosphate + 2 oxidized [2Fe-2S]-[ferredoxin] + H2O = (2E)-4-hydroxy-3-methylbut-2-enyl diphosphate + 2 reduced [2Fe-2S]-[ferredoxin] + 2 H(+). The catalysed reaction is dimethylallyl diphosphate + 2 oxidized [2Fe-2S]-[ferredoxin] + H2O = (2E)-4-hydroxy-3-methylbut-2-enyl diphosphate + 2 reduced [2Fe-2S]-[ferredoxin] + 2 H(+). It participates in isoprenoid biosynthesis; dimethylallyl diphosphate biosynthesis; dimethylallyl diphosphate from (2E)-4-hydroxy-3-methylbutenyl diphosphate: step 1/1. It functions in the pathway isoprenoid biosynthesis; isopentenyl diphosphate biosynthesis via DXP pathway; isopentenyl diphosphate from 1-deoxy-D-xylulose 5-phosphate: step 6/6. In terms of biological role, catalyzes the conversion of 1-hydroxy-2-methyl-2-(E)-butenyl 4-diphosphate (HMBPP) into a mixture of isopentenyl diphosphate (IPP) and dimethylallyl diphosphate (DMAPP). Acts in the terminal step of the DOXP/MEP pathway for isoprenoid precursor biosynthesis. This Enterobacter sp. (strain 638) protein is 4-hydroxy-3-methylbut-2-enyl diphosphate reductase.